Reading from the N-terminus, the 208-residue chain is ATP-dependent Clp protease proteolytic subunit (208 aa).

Serine 111 functions as the Nucleophile in the catalytic mechanism. Histidine 136 is a catalytic residue.

The protein belongs to the peptidase S14 family. Fourteen ClpP subunits assemble into 2 heptameric rings which stack back to back to give a disk-like structure with a central cavity, resembling the structure of eukaryotic proteasomes.

Its subcellular location is the cytoplasm. The enzyme catalyses Hydrolysis of proteins to small peptides in the presence of ATP and magnesium. alpha-casein is the usual test substrate. In the absence of ATP, only oligopeptides shorter than five residues are hydrolyzed (such as succinyl-Leu-Tyr-|-NHMec, and Leu-Tyr-Leu-|-Tyr-Trp, in which cleavage of the -Tyr-|-Leu- and -Tyr-|-Trp bonds also occurs).. Its function is as follows. Cleaves peptides in various proteins in a process that requires ATP hydrolysis. Has a chymotrypsin-like activity. Plays a major role in the degradation of misfolded proteins. In Vibrio campbellii (strain ATCC BAA-1116), this protein is ATP-dependent Clp protease proteolytic subunit.